Here is a 167-residue protein sequence, read N- to C-terminus: Ribosome maturation factor RimM (167 aa).

Positions 94–166 (TGRAYLHELI…YMVVPRFDEF (73 aa)) constitute a PRC barrel domain.

This sequence belongs to the RimM family. In terms of assembly, binds ribosomal protein uS19.

The protein localises to the cytoplasm. Functionally, an accessory protein needed during the final step in the assembly of 30S ribosomal subunit, possibly for assembly of the head region. Essential for efficient processing of 16S rRNA. May be needed both before and after RbfA during the maturation of 16S rRNA. It has affinity for free ribosomal 30S subunits but not for 70S ribosomes. The sequence is that of Ribosome maturation factor RimM from Chlorobium phaeobacteroides (strain DSM 266 / SMG 266 / 2430).